The primary structure comprises 240 residues: MADS-box protein SVP (240 aa).

In terms of domain architecture, MADS-box spans 3-57 (REKIQIRKIDNATARQVTFSKRRRGLFKKAEELSVLCDADVALIIFSSTGKLFEF). In terms of domain architecture, K-box spans 87–180 (QLVENSDHAR…GTQLTEENER (94 aa)). The interval 202 to 240 (VYEEGQSSESITNAGNSTGAPVDSESSDTSLRLGLPYGG) is disordered. Over residues 206-220 (GQSSESITNAGNSTG) the composition is skewed to polar residues.

Forms a heterodimer with AP1 and SVP. Interacts with the SEU-LUG corepressor complex when complexed to AP1. Interacts with AGL15. Interacts with AGL16. In terms of tissue distribution, detected in roots and leaves. Expressed at very low levels in flowers and siliques. Present in floral meristems.

It localises to the nucleus. Functionally, transcription repressor that inhibit floral transition in the autonomous flowering pathway, independent of photoperiod and temperature. Acts in a dosage-dependent manner. Together with AGL24 and AP1, controls the identity of the floral meristem and regulates expression of class B, C and E genes. Promotes EFM expression to suppress flowering. In Arabidopsis thaliana (Mouse-ear cress), this protein is MADS-box protein SVP.